The sequence spans 51 residues: Large ribosomal subunit protein eL39 (51 aa).

The protein belongs to the eukaryotic ribosomal protein eL39 family.

This Plutella xylostella (Diamondback moth) protein is Large ribosomal subunit protein eL39 (RpL39).